We begin with the raw amino-acid sequence, 80 residues long: Trefoil factor 3 (80 aa).

Positions 1–21 are cleaved as a signal peptide; it reads MEARMFWLLVVLLALASSSSA. A P-type domain is found at 30-73; that stretch reads NQCAVPAKDRVDCGYPQVTPEQCNNRGCCFDSSIXGVPWCFKPL. 3 disulfides stabilise this stretch: cysteine 32–cysteine 58, cysteine 42–cysteine 57, and cysteine 52–cysteine 69.

Monomer. Homodimer; disulfide-linked.

Its subcellular location is the secreted. The protein localises to the extracellular space. The protein resides in the extracellular matrix. It is found in the cytoplasm. Involved in the maintenance and repair of the intestinal mucosa. Promotes the mobility of epithelial cells in healing processes (motogen). This Sus scrofa (Pig) protein is Trefoil factor 3 (TFF3).